The sequence spans 690 residues: Protein-glucosylgalactosylhydroxylysine glucosidase (690 aa).

Residue 299–300 (WD) coordinates substrate. Glutamate 429 (proton donor) is an active-site residue. Position 497–498 (497–498 (KQ)) interacts with substrate.

It belongs to the glycosyl hydrolase 65 family.

It carries out the reaction (5R)-5-O-[alpha-D-glucosyl-(1-&gt;2)-beta-D-galactosyl]-5-hydroxy-L-lysyl-[collagen] + H2O = (5R)-5-O-(beta-D-galactosyl)-5-hydroxy-L-lysyl-[collagen] + D-glucose. Catalyzes the hydrolysis of glucose from the disaccharide unit linked to hydroxylysine residues of collagen and collagen-like proteins. This is Protein-glucosylgalactosylhydroxylysine glucosidase from Mus musculus (Mouse).